The chain runs to 232 residues: Ferric nitrobindin-like protein (232 aa).

Residues 1–10 (MSENETSKTG) are compositionally biased toward polar residues. The segment at 1–33 (MSENETSKTGGNAGVPGSGADAPSLSDSPAISG) is disordered. The GXWXGXG signature appears at 85–91 (GVWRGEG).

Belongs to the nitrobindin family.

This chain is Ferric nitrobindin-like protein, found in Corynebacterium efficiens (strain DSM 44549 / YS-314 / AJ 12310 / JCM 11189 / NBRC 100395).